Consider the following 54-residue polypeptide: uncharacterized protein (54 aa).

The protein belongs to the ycf18/nblA family.

It localises to the plastid. The protein localises to the chloroplast. This is an uncharacterized protein from Cyanidium caldarium (Red alga).